The primary structure comprises 126 residues: Large ribosomal subunit protein bL20c (126 aa).

The protein belongs to the bacterial ribosomal protein bL20 family.

It is found in the plastid. The protein localises to the chloroplast. Binds directly to 23S ribosomal RNA and is necessary for the in vitro assembly process of the 50S ribosomal subunit. It is not involved in the protein synthesizing functions of that subunit. This Guizotia abyssinica (Niger) protein is Large ribosomal subunit protein bL20c.